Here is a 797-residue protein sequence, read N- to C-terminus: RAS guanyl-releasing protein 1 (797 aa).

Residues 1–12 (MGTLGKAREAPR) are compositionally biased toward basic and acidic residues. The tract at residues 1 to 23 (MGTLGKAREAPRKPSHGCRAASK) is disordered. An N-terminal Ras-GEF domain is found at 53 to 176 (LGHLAKGASL…RLIDTTQINA (124 aa)). The tract at residues 57–110 (AKGASLDDLIDSCIQSFDADGNLCRSNQLLQVMLTMHRIVISSAELLQKVITLY) is ras exchanger motif region; required for transforming activity. Threonine 184 is subject to Phosphothreonine; by PKC. In terms of domain architecture, Ras-GEF spans 205–436 (EPEELSEHLT…YELSYAREPR (232 aa)). 2 consecutive EF-hand domains span residues 470-505 (HVQR…FPFS) and 506-532 (FCVM…ASSI). Ca(2+)-binding residues include aspartate 483, aspartate 485, aspartate 487, tyrosine 489, and glutamate 494. A Phorbol-ester/DAG-type zinc finger spans residues 541–591 (PHNFQETTYLKPTFCDNCAGFLWGVIKQGYRCKDCGMNCHKQCKDLVVFEC). A disordered region spans residues 673–694 (TQTESQPWIGSEGPSGPFVLSS). Positions 686 to 694 (PSGPFVLSS) are suppress the PT region-mediated translocation to plasma membrane. Residues 718–797 (LVRKRAFVKW…LAQMEQGDCS (80 aa)) are PT region; mediates the BCR-dependent translocation to plasma membrane. Residues 746 to 786 (PTYQELEQEINTLKADNDALKIQLKYAQKKIESLQLEKSNH) adopt a coiled-coil conformation.

The protein belongs to the RASGRP family. As to quaternary structure, homodimer. Forms a signaling complex with DGKZ and HRAS. Interacts with F-actin. Interacts with SKAP1. In terms of tissue distribution, expressed in brain with higher expression in cerebellum, cerebral cortex and amygdala. Expressed in the hematopoietic system. Expressed in T-cells (at protein level). Expressed in NK cells (at protein level).

Its subcellular location is the cytoplasm. It localises to the cytosol. It is found in the cell membrane. The protein localises to the golgi apparatus membrane. The protein resides in the endoplasmic reticulum membrane. With respect to regulation, autoinhibited. Activated by diacylglycerol and calcium binding, which induces a conformational change releasing the autoinhibitory state. Regulated by DGKA. Regulated by DGKZ. Regulated by PLC gamma and F-actin polymerization. Functionally, functions as a calcium- and diacylglycerol (DAG)-regulated nucleotide exchange factor specifically activating Ras through the exchange of bound GDP for GTP. Activates the Erk/MAP kinase cascade. Regulates T-cell/B-cell development, homeostasis and differentiation by coupling T-lymphocyte/B-lymphocyte antigen receptors to Ras. Regulates NK cell cytotoxicity and ITAM-dependent cytokine production by activation of Ras-mediated ERK and JNK pathways. Functions in mast cell degranulation and cytokine secretion, regulating FcERI-evoked allergic responses. May also function in differentiation of other cell types. The protein is RAS guanyl-releasing protein 1 (RASGRP1) of Homo sapiens (Human).